A 624-amino-acid polypeptide reads, in one-letter code: Leucine-rich repeat and IQ domain-containing protein 3 (624 aa).

3 LRR repeats span residues 51-72, 73-94, and 98-119; these read SLRVCIFSNNFITDIHPLQSCI, KLIKLDLHGNQIKSLPNTKFWN, and NLKLLYLHDNGFAKLKNICVLS. The region spanning 132 to 179 is the LRRCT domain; it reads CPVSLKKGYRHVLVNSIWPLKALDHHVISDEEIIQNWHLPERFKACNH. Positions 215–244 constitute an IQ domain; it reads HNSPVLIVQRWIRGFLVRKNLSPVFFHKKK. The stretch at 553–614 forms a coiled coil; it reads KQKLKAEKYR…TKVAIVKTNL (62 aa).

The polypeptide is Leucine-rich repeat and IQ domain-containing protein 3 (LRRIQ3) (Homo sapiens (Human)).